Consider the following 352-residue polypeptide: Ribosome biogenesis protein BRX1 homolog (352 aa).

The tract at residues 1-47 (MAATKRKRRGDLEVQAKKPKKNRKDAGQPAKQADVAKEAEEEKDRIP) is disordered. Basic and acidic residues predominate over residues 34–46 (DVAKEAEEEKDRI). A Brix domain is found at 59–248 (ERILIFSSRG…LIKIFQGSFG (190 aa)). K159 participates in a covalent cross-link: Glycyl lysine isopeptide (Lys-Gly) (interchain with G-Cter in SUMO2). S260 carries the phosphoserine modification. At K275 the chain carries N6-acetyllysine. The interval 281–301 (QVKDVQKSRKKEPKTILPHDP) is disordered. Residues K313 and K321 each participate in a glycyl lysine isopeptide (Lys-Gly) (interchain with G-Cter in SUMO2) cross-link.

This sequence belongs to the BRX1 family.

The protein resides in the nucleus. The protein localises to the nucleolus. Its function is as follows. Required for biogenesis of the 60S ribosomal subunit. This chain is Ribosome biogenesis protein BRX1 homolog (Brix1), found in Rattus norvegicus (Rat).